The chain runs to 463 residues: Sialic acid-binding Ig-like lectin 9 (463 aa).

An N-terminal signal peptide occupies residues 1–17 (MLLLLLPLLWGRERAEG). Topologically, residues 18-348 (QTSKLLTMQS…SKATSGVTQG (331 aa)) are extracellular. An Ig-like V-type domain is found at 20-140 (SKLLTMQSSV…KHHRLSVNVT (121 aa)). Intrachain disulfides connect C36/C170, C41/C102, and C164/C213. N-linked (GlcNAc...) asparagine glycosylation occurs at N101. R120 provides a ligand contact to N-acetylneuraminate. N-linked (GlcNAc...) asparagine glycosylation is found at N138 and N161. Residues 146 to 229 (PNILIPGTLE…ASVTTNKTVH (84 aa)) form the Ig-like C2-type 1 domain. N-linked (GlcNAc...) asparagine glycosylation is found at N225, N231, N238, and N256. The Ig-like C2-type 2 domain occupies 236-336 (PQNLTMTVFQ…GSQQVYLNVS (101 aa)). A disulfide bridge connects residues C272 and C320. The N-linked (GlcNAc...) asparagine glycan is linked to N334. A helical transmembrane segment spans residues 349–369 (VVGGAGATALVFLSFCVIFVV). The Cytoplasmic segment spans residues 370–463 (VRSCRKKSAR…TEYSEIKIHR (94 aa)). The segment at 380 to 428 (PAAGVGDTGIEDANAVRGSASQGPLTEPWAEDSPPDQPPPASARSSVGE) is disordered. Positions 431 to 436 (LQYASL) match the ITIM motif motif. Residues 444–463 (WDSRGQEATDTEYSEIKIHR) are disordered. An SLAM-like motif motif is present at residues 454–459 (TEYSEI).

This sequence belongs to the immunoglobulin superfamily. SIGLEC (sialic acid binding Ig-like lectin) family. In terms of tissue distribution, expressed by peripheral blood leukocytes (neutrophils and monocytes but not eosinophils). Found in liver, fetal liver, bone marrow, placenta, spleen and in lower levels in skeletal muscle, fetal brain, stomach, lung, thymus, prostate, brain, mammary, adrenal gland, colon, trachea, cerebellum, testis, small intestine and spinal cordon.

It localises to the membrane. In terms of biological role, putative adhesion molecule that mediates sialic-acid dependent binding to cells. Preferentially binds to alpha-2,3- or alpha-2,6-linked sialic acid. The sialic acid recognition site may be masked by cis interactions with sialic acids on the same cell surface. This is Sialic acid-binding Ig-like lectin 9 (SIGLEC9) from Homo sapiens (Human).